The sequence spans 165 residues: Large ribosomal subunit protein uL30 (165 aa).

This sequence belongs to the universal ribosomal protein uL30 family. As to quaternary structure, part of the 50S ribosomal subunit.

This Thermoplasma acidophilum (strain ATCC 25905 / DSM 1728 / JCM 9062 / NBRC 15155 / AMRC-C165) protein is Large ribosomal subunit protein uL30.